Reading from the N-terminus, the 914-residue chain is UPF0182 protein Syncc9605_1323 (914 aa).

A run of 9 helical transmembrane segments spans residues 4 to 24 (LLLL…WLWF), 37 to 57 (WLLQ…ARAW), 81 to 101 (IALL…LDLL), 123 to 143 (RIGS…MTWL), 152 to 172 (IVAA…SLAL), 195 to 215 (FAGL…TLVF), 240 to 260 (MRLI…LVWL), 285 to 305 (LPLR…LLLP), and 312 to 332 (QFLA…TPLT).

The protein belongs to the UPF0182 family.

The protein localises to the cell membrane. The polypeptide is UPF0182 protein Syncc9605_1323 (Synechococcus sp. (strain CC9605)).